A 150-amino-acid polypeptide reads, in one-letter code: Large ribosomal subunit protein bL9 (150 aa).

Belongs to the bacterial ribosomal protein bL9 family.

In terms of biological role, binds to the 23S rRNA. The chain is Large ribosomal subunit protein bL9 from Shewanella pealeana (strain ATCC 700345 / ANG-SQ1).